The sequence spans 699 residues: Elongation factor G (699 aa).

One can recognise a tr-type G domain in the interval 8-288 (EDYRNFGIMA…AVVDYLPSPL (281 aa)). GTP-binding positions include 17–24 (AHIDAGKT), 86–90 (DTPGH), and 140–143 (NKMD).

The protein belongs to the TRAFAC class translation factor GTPase superfamily. Classic translation factor GTPase family. EF-G/EF-2 subfamily.

The protein resides in the cytoplasm. Catalyzes the GTP-dependent ribosomal translocation step during translation elongation. During this step, the ribosome changes from the pre-translocational (PRE) to the post-translocational (POST) state as the newly formed A-site-bound peptidyl-tRNA and P-site-bound deacylated tRNA move to the P and E sites, respectively. Catalyzes the coordinated movement of the two tRNA molecules, the mRNA and conformational changes in the ribosome. The polypeptide is Elongation factor G (Rhizobium etli (strain ATCC 51251 / DSM 11541 / JCM 21823 / NBRC 15573 / CFN 42)).